Here is a 624-residue protein sequence, read N- to C-terminus: Probable potassium transport system protein Kup (624 aa).

12 consecutive transmembrane segments (helical) span residues 16-36 (ALLT…SPLY), 59-79 (IISM…VMLV), 106-126 (FVAV…VITP), 147-167 (FILP…PLGT), 174-194 (FGPI…PQII), 211-231 (LIVA…LTVT), 252-272 (WFCV…ALVI), 292-312 (IPLV…VISG), 342-362 (IYMP…VLVF), 371-391 (AYGL…LIYV), 394-414 (TWWK…LLFA), and 418-438 (TKIH…IVVM).

This sequence belongs to the HAK/KUP transporter (TC 2.A.72) family.

Its subcellular location is the cell membrane. It catalyses the reaction K(+)(in) + H(+)(in) = K(+)(out) + H(+)(out). Its function is as follows. Transport of potassium into the cell. Likely operates as a K(+):H(+) symporter. This is Probable potassium transport system protein Kup from Corynebacterium glutamicum (strain ATCC 13032 / DSM 20300 / JCM 1318 / BCRC 11384 / CCUG 27702 / LMG 3730 / NBRC 12168 / NCIMB 10025 / NRRL B-2784 / 534).